The chain runs to 499 residues: Taxadiene 5-alpha hydroxylase (499 aa).

Residues 22-42 (TESFSIALSAIAGILLLLLLF) traverse the membrane as a helical; Signal-anchor segment. Cys445 contacts heme.

Belongs to the cytochrome P450 family. The cofactor is heme.

It localises to the membrane. The catalysed reaction is taxa-4(5),11(12)-diene + reduced [NADPH--hemoprotein reductase] + O2 = taxa-4(20),11-dien-5alpha-ol + oxidized [NADPH--hemoprotein reductase] + H2O + H(+). It participates in alkaloid biosynthesis; taxol biosynthesis; taxa-4(20),11-dien-5alpha-ol from geranylgeranyl diphosphate: step 2/2. Catalyzes the first oxygenation step of taxol biosynthesis. Can use both taxa-4(5),11(12)-diene and taxa-4(20),11(12)-diene as substrate. In Taxus cuspidata (Japanese yew), this protein is Taxadiene 5-alpha hydroxylase.